The sequence spans 477 residues: Histidine permease HisP (477 aa).

12 consecutive transmembrane segments (helical) span residues 16-36 (ITMIALGGTIGTGLFLTSGAT), 40-60 (AGPWGAVLAYCFIGIMVYFVM), 86-106 (PAFGFALGWNYWLNGAITIAV), 126-146 (IFSGIATVLIFIINVMAVGAF), 156-176 (IKVITIVLFLAIGLLTIFGVL), 192-212 (HGFVGGISGFVGVLLIAGFSF), 238-258 (SIFWRILLFYIFSIIVIAAII), 284-304 (IGFAVAASVMNAVILTSVISS), 337-359 (IPFYALLATTIICFIAFLTGIFG), 364-386 (LFLIDLSSLTGFLAWLGISVSHI), 408-428 (WFPFGPIVALLMTGAIAINLD), and 437-457 (WGEGLALYAAIPIFIVLYFGY).

The protein belongs to the amino acid-polyamine-organocation (APC) superfamily. Amino acid transporter (AAT) (TC 2.A.3.1) family.

It is found in the cell membrane. Functionally, involved in histidine uptake. Has low affinity for arginine and lysine. Plays no significant role in the excretion of accumulated histidine. The sequence is that of Histidine permease HisP from Lactococcus lactis subsp. cremoris (strain MG1363).